A 318-amino-acid polypeptide reads, in one-letter code: NADH-ubiquinone oxidoreductase chain 1 (318 aa).

Transmembrane regions (helical) follow at residues 2–22 (PVIN…FLML), 69–89 (ILYI…WTPL), 100–120 (LGLL…LWSG), 146–166 (LALI…STLI), 171–191 (HSWL…STLA), 222–242 (LFFM…AMIF), 253–273 (ELHT…FLWI), and 294–314 (LPLT…TSGI).

This sequence belongs to the complex I subunit 1 family. Core subunit of respiratory chain NADH dehydrogenase (Complex I) which is composed of 45 different subunits.

The protein localises to the mitochondrion inner membrane. It catalyses the reaction a ubiquinone + NADH + 5 H(+)(in) = a ubiquinol + NAD(+) + 4 H(+)(out). Its function is as follows. Core subunit of the mitochondrial membrane respiratory chain NADH dehydrogenase (Complex I) which catalyzes electron transfer from NADH through the respiratory chain, using ubiquinone as an electron acceptor. Essential for the catalytic activity and assembly of complex I. In Pongo pygmaeus (Bornean orangutan), this protein is NADH-ubiquinone oxidoreductase chain 1 (MT-ND1).